Consider the following 351-residue polypeptide: Glycerol-1-phosphate dehydrogenase [NAD(P)+] (351 aa).

NAD(+) contacts are provided by residues 97–101 and 119–122; these read GKVID and TSPS. A substrate-binding site is contributed by aspartate 124. NAD(+) is bound at residue serine 128. Aspartate 171 lines the substrate pocket. Zn(2+) contacts are provided by aspartate 171 and histidine 251. Residue histidine 255 coordinates substrate. Histidine 267 is a Zn(2+) binding site.

This sequence belongs to the glycerol-1-phosphate dehydrogenase family. As to quaternary structure, homodimer. The cofactor is Zn(2+).

The protein resides in the cytoplasm. It carries out the reaction sn-glycerol 1-phosphate + NAD(+) = dihydroxyacetone phosphate + NADH + H(+). The enzyme catalyses sn-glycerol 1-phosphate + NADP(+) = dihydroxyacetone phosphate + NADPH + H(+). It functions in the pathway membrane lipid metabolism; glycerophospholipid metabolism. Functionally, catalyzes the NAD(P)H-dependent reduction of dihydroxyacetonephosphate (DHAP or glycerone phosphate) to glycerol 1-phosphate (G1P). The G1P thus generated is used as the glycerophosphate backbone of phospholipids in the cellular membranes of Archaea. This chain is Glycerol-1-phosphate dehydrogenase [NAD(P)+], found in Saccharolobus islandicus (strain L.S.2.15 / Lassen #1) (Sulfolobus islandicus).